A 295-amino-acid chain; its full sequence is Signal-transducing adaptor protein 1 (295 aa).

The PH domain occupies 25–121 (PLYFEGFLLI…WRGFILTVTE (97 aa)). Tyrosine 168 is modified (phosphotyrosine). One can recognise an SH2 domain in the interval 177–280 (ACFYTVSRKE…TDENTGQEPS (104 aa)). The segment at 270–295 (STDENTGQEPSMEGRSEKLKKNPHIA) is disordered.

Interacts with KIT and CSF1R. Interacts with URI1; the interaction is phosphorylation-dependent and occurs in a growth-dependent manner. Post-translationally, phosphorylated on tyrosine by TEC. Phosphorylated on tyrosine by KIT.

Its subcellular location is the nucleus. It is found in the cytoplasm. It localises to the mitochondrion. Functionally, in BCR signaling, appears to function as a docking protein acting downstream of TEC and participates in a positive feedback loop by increasing the activity of TEC. The polypeptide is Signal-transducing adaptor protein 1 (STAP1) (Homo sapiens (Human)).